The following is a 958-amino-acid chain: Coiled-coil domain-containing protein 187 (958 aa).

Positions 116 to 132 (SSVSSGRMSGSSGGHES) are enriched in low complexity. 4 disordered regions span residues 116–160 (SSVS…SDPR), 345–447 (ELTR…PRFF), 470–492 (QDISVQKSGSSLKKPSPFSQRPW), and 510–602 (EPSP…KAQA). Composition is skewed to polar residues over residues 374–398 (LQSTQDMQGSSKTAWTVTEGKNSSL) and 470–491 (QDISVQKSGSSLKKPSPFSQRP). The span at 536-545 (SSPSSKGKSA) shows a compositional bias: low complexity. A coiled-coil region spans residues 718–743 (KQARLQALETMAEALRQRVDILTTKL). The interval 916-958 (EVKKEGLVTPWTTRSCGKGEPADRPWAGWSGGQGGLPWASSTA) is disordered.

The chain is Coiled-coil domain-containing protein 187 from Mus musculus (Mouse).